A 579-amino-acid polypeptide reads, in one-letter code: 2-succinyl-5-enolpyruvyl-6-hydroxy-3-cyclohexene-1-carboxylate synthase (579 aa).

Belongs to the TPP enzyme family. MenD subfamily. Homodimer. Mg(2+) serves as cofactor. It depends on Mn(2+) as a cofactor. Requires thiamine diphosphate as cofactor.

It carries out the reaction isochorismate + 2-oxoglutarate + H(+) = 5-enolpyruvoyl-6-hydroxy-2-succinyl-cyclohex-3-ene-1-carboxylate + CO2. It functions in the pathway quinol/quinone metabolism; 1,4-dihydroxy-2-naphthoate biosynthesis; 1,4-dihydroxy-2-naphthoate from chorismate: step 2/7. The protein operates within quinol/quinone metabolism; menaquinone biosynthesis. Its function is as follows. Catalyzes the thiamine diphosphate-dependent decarboxylation of 2-oxoglutarate and the subsequent addition of the resulting succinic semialdehyde-thiamine pyrophosphate anion to isochorismate to yield 2-succinyl-5-enolpyruvyl-6-hydroxy-3-cyclohexene-1-carboxylate (SEPHCHC). The chain is 2-succinyl-5-enolpyruvyl-6-hydroxy-3-cyclohexene-1-carboxylate synthase from Oceanobacillus iheyensis (strain DSM 14371 / CIP 107618 / JCM 11309 / KCTC 3954 / HTE831).